We begin with the raw amino-acid sequence, 125 residues long: Alpha-endosulfine (125 aa).

The span at 1 to 37 (MSDKYIGDSHLEETGEEKQDSQEKEAVTPEKAEEQKL) shows a compositional bias: basic and acidic residues. A disordered region spans residues 1–52 (MSDKYIGDSHLEETGEEKQDSQEKEAVTPEKAEEQKLKAKYPNLGQKPGGSD). Thr-28 bears the Phosphothreonine; by CDK2 mark. Ser-67 is modified (phosphoserine; by GWL). The interval 86–107 (GPDKNLVTGDHIPTPQDLPQRK) is disordered. Thr-99 is subject to Phosphothreonine; by CDK2. Ser-109 is modified (phosphoserine; by PKA).

It belongs to the endosulfine family. As to quaternary structure, interacts (when phosphorylated at Ser-67) with ppp2r2d. In terms of processing, phosphorylation at Ser-67 by gwl during mitosis is essential for interaction with PPP2R2D (PR55-delta) and subsequent inactivation of PP2A. Phosphorylated by PKA.

The protein localises to the cytoplasm. In terms of biological role, protein phosphatase inhibitor that specifically inhibits protein phosphatase 2A (PP2A) during mitosis. When phosphorylated at Ser-67 during mitosis, specifically interacts with ppp2r2d (PR55-delta) and inhibits its activity, leading to inactivation of PP2A, an essential condition to keep cyclin-B1-CDK1 activity high during M phase. This is Alpha-endosulfine (ensa) from Xenopus laevis (African clawed frog).